A 488-amino-acid polypeptide reads, in one-letter code: Bifunctional protein GlmU (488 aa).

The tract at residues 1–237 (MPRTRTPLAA…AEEASGVNDR (237 aa)) is pyrophosphorylase. UDP-N-acetyl-alpha-D-glucosamine-binding positions include 13-16 (LAAG), K27, Q82, 87-88 (GT), 110-112 (SGD), G149, E164, N179, and N235. D112 lines the Mg(2+) pocket. N235 serves as a coordination point for Mg(2+). Residues 238 to 258 (VELSRANRVMVGRLAEAFMRA) are linker. Positions 259 to 488 (GVTIEDPARF…KGRPAARRAS (230 aa)) are N-acetyltransferase. R341 and K359 together coordinate UDP-N-acetyl-alpha-D-glucosamine. The active-site Proton acceptor is the H371. 2 residues coordinate UDP-N-acetyl-alpha-D-glucosamine: Y374 and N385. Acetyl-CoA is bound by residues A388, 394-395 (NY), S413, A431, and R448. The disordered stretch occupies residues 459–488 (AQRQAEKQMKGTATGPASARKGRPAARRAS). Residues 478–488 (RKGRPAARRAS) are compositionally biased toward basic residues.

This sequence in the N-terminal section; belongs to the N-acetylglucosamine-1-phosphate uridyltransferase family. In the C-terminal section; belongs to the transferase hexapeptide repeat family. Homotrimer. It depends on Mg(2+) as a cofactor.

The protein resides in the cytoplasm. It carries out the reaction alpha-D-glucosamine 1-phosphate + acetyl-CoA = N-acetyl-alpha-D-glucosamine 1-phosphate + CoA + H(+). The enzyme catalyses N-acetyl-alpha-D-glucosamine 1-phosphate + UTP + H(+) = UDP-N-acetyl-alpha-D-glucosamine + diphosphate. It functions in the pathway nucleotide-sugar biosynthesis; UDP-N-acetyl-alpha-D-glucosamine biosynthesis; N-acetyl-alpha-D-glucosamine 1-phosphate from alpha-D-glucosamine 6-phosphate (route II): step 2/2. Its pathway is nucleotide-sugar biosynthesis; UDP-N-acetyl-alpha-D-glucosamine biosynthesis; UDP-N-acetyl-alpha-D-glucosamine from N-acetyl-alpha-D-glucosamine 1-phosphate: step 1/1. The protein operates within bacterial outer membrane biogenesis; LPS lipid A biosynthesis. Catalyzes the last two sequential reactions in the de novo biosynthetic pathway for UDP-N-acetylglucosamine (UDP-GlcNAc). The C-terminal domain catalyzes the transfer of acetyl group from acetyl coenzyme A to glucosamine-1-phosphate (GlcN-1-P) to produce N-acetylglucosamine-1-phosphate (GlcNAc-1-P), which is converted into UDP-GlcNAc by the transfer of uridine 5-monophosphate (from uridine 5-triphosphate), a reaction catalyzed by the N-terminal domain. The chain is Bifunctional protein GlmU from Anaeromyxobacter dehalogenans (strain 2CP-1 / ATCC BAA-258).